Reading from the N-terminus, the 859-residue chain is Outer membrane usher protein AfaC (859 aa).

The N-terminal stretch at M1–R28 is a signal peptide.

Belongs to the fimbrial export usher family.

Its subcellular location is the cell outer membrane. Functionally, involved in the export and assembly of AFA-III afimbrial adhesin subunits across the outer membrane. The sequence is that of Outer membrane usher protein AfaC (afaC) from Escherichia coli.